The primary structure comprises 153 residues: uncharacterized protein (153 aa).

To M.jannaschii MJ1183.

This is an uncharacterized protein from Methanothermobacter thermautotrophicus (strain ATCC 29096 / DSM 1053 / JCM 10044 / NBRC 100330 / Delta H) (Methanobacterium thermoautotrophicum).